The following is a 356-amino-acid chain: Histidinol-phosphate aminotransferase (356 aa).

Position 217 is an N6-(pyridoxal phosphate)lysine (lysine 217).

Belongs to the class-II pyridoxal-phosphate-dependent aminotransferase family. Histidinol-phosphate aminotransferase subfamily. Homodimer. Requires pyridoxal 5'-phosphate as cofactor.

The catalysed reaction is L-histidinol phosphate + 2-oxoglutarate = 3-(imidazol-4-yl)-2-oxopropyl phosphate + L-glutamate. It participates in amino-acid biosynthesis; L-histidine biosynthesis; L-histidine from 5-phospho-alpha-D-ribose 1-diphosphate: step 7/9. This chain is Histidinol-phosphate aminotransferase, found in Chromobacterium violaceum (strain ATCC 12472 / DSM 30191 / JCM 1249 / CCUG 213 / NBRC 12614 / NCIMB 9131 / NCTC 9757 / MK).